The chain runs to 664 residues: Macoilin (664 aa).

The next 4 helical transmembrane spans lie at 28 to 48 (TFLYLKFLVVWALVLLADFVL), 75 to 95 (AFSVFFVCVAFTSNIICLLFI), 120 to 140 (VCLPTVSLWILFVYIEAAIRF), and 154 to 174 (FAAHCIGYPVVTLGFGFKSYV). A compositionally biased stretch (basic and acidic residues) spans 253–265 (REKGKEKDKDAKK). The tract at residues 253 to 274 (REKGKEKDKDAKKHNLGINNNN) is disordered. At Ser305 the chain carries Phosphoserine. The span at 320–348 (KNYKNASGVVNSSPRSHSATNGSIPSSSS) shows a compositional bias: polar residues. Residues 320–375 (KNYKNASGVVNSSPRSHSATNGSIPSSSSKNEKKQKCTSKSPSTHKDLMENCIPNN) form a disordered region. N-linked (GlcNAc...) asparagine glycosylation is present at Asn324. Ser332 carries the post-translational modification Phosphoserine. N-linked (GlcNAc...) asparagine glycosylation is found at Asn340 and Asn452. Residues 630-664 (TSPLSPVSPHYSSKFVETSPSGLDPNASVYQPLKK) are disordered. Ser631 and Ser634 each carry phosphoserine. Asn655 carries an N-linked (GlcNAc...) asparagine glycan.

This sequence belongs to the macoilin family.

The protein resides in the rough endoplasmic reticulum membrane. It localises to the nucleus membrane. Functionally, plays a role in the regulation of neuronal activity. The sequence is that of Macoilin (MACO1) from Canis lupus familiaris (Dog).